The sequence spans 416 residues: Probable carboxypeptidase An18g06210 (416 aa).

The signal sequence occupies residues 1 to 16 (MKSPISLLAAVGVASA). Residues Asn-54, Asn-70, and Asn-129 are each glycosylated (N-linked (GlcNAc...) asparagine). Residue Asp-142 participates in Zn(2+) binding. Catalysis depends on Glu-174, which acts as the Proton acceptor. Glu-175 contributes to the Zn(2+) binding site. Asn-187 and Asn-319 each carry an N-linked (GlcNAc...) asparagine glycan.

Belongs to the peptidase M20A family. Zn(2+) is required as a cofactor.

The protein resides in the secreted. The protein is Probable carboxypeptidase An18g06210 of Aspergillus niger (strain ATCC MYA-4892 / CBS 513.88 / FGSC A1513).